Consider the following 173-residue polypeptide: Bursicon (173 aa).

The first 32 residues, 1–32 (MLRHLLRHENNKVFVLILLYCVLVSILKLCTA), serve as a signal peptide directing secretion. 5 disulfides stabilise this stretch: Cys-52-Cys-101, Cys-66-Cys-115, Cys-76-Cys-136, Cys-80-Cys-138, and Cys-98-Cys-141. One can recognise a CTCK domain in the interval 52-142 (CQVTPVIHVL…PLECMCRPCT (91 aa)).

Heterodimer of Burs and Pburs. As to expression, expressed in one to two pairs of neurons in each of the thoracic and abdominal neuromeres of the larval CNS. Coexpressed with CCAP in most CCAP-specific neurons. Coexpressed with Pburs in four bilateral neurons in thoracic and abdominal neuromeres of the ventral nervous system.

It localises to the secreted. Functionally, final heterodimeric neurohormone released at the end of the molting cycle, involved in the sclerotization (tanning) of the insect cuticle, melanization and wing spreading. Heterodimer specifically activates the G protein-coupled receptor rk. This is Bursicon from Drosophila melanogaster (Fruit fly).